Here is a 314-residue protein sequence, read N- to C-terminus: Ribosomal RNA small subunit methyltransferase H (314 aa).

S-adenosyl-L-methionine contacts are provided by residues 37–39 (GGH), D57, F83, D105, and Q112.

Belongs to the methyltransferase superfamily. RsmH family.

The protein resides in the cytoplasm. It catalyses the reaction cytidine(1402) in 16S rRNA + S-adenosyl-L-methionine = N(4)-methylcytidine(1402) in 16S rRNA + S-adenosyl-L-homocysteine + H(+). In terms of biological role, specifically methylates the N4 position of cytidine in position 1402 (C1402) of 16S rRNA. The protein is Ribosomal RNA small subunit methyltransferase H of Thioalkalivibrio sulfidiphilus (strain HL-EbGR7).